We begin with the raw amino-acid sequence, 333 residues long: MNKLITIERHFVEEQKLNPDATGELTDLLYDVAFAAKLVRREVVRAGLVDILGMAGTTNVQGEEVKKLDLFANDKIINAIGQHGRFALMGSEENEGTIIPPKNESGKYVLLFDPLDGSSNIDVNVSVGTIFSIYRLTGDDPSKADINDCLQKGSQQVAAGYVIYGSSVVMVYTTGHGVHGFTYDPTIGEFLLSHENITTPKQGKYYSINEGSRKQFNDSTVNYINYLKEEDAETGRPYSTRYIGSLVADFHRNLLTGGVFVYPATKQHRNGKLRLMYEANPLAFICEQAGGRATNGSERILDIDPSELHQRTPLYIGSEEDVIIAEEFEQGKR.

Mg(2+) is bound by residues Glu92, Asp113, Leu115, and Asp116. Substrate contacts are provided by residues 116 to 119 (DGSS), Asn209, Tyr242, and Lys272. Glu278 lines the Mg(2+) pocket.

It belongs to the FBPase class 1 family. As to quaternary structure, homotetramer. The cofactor is Mg(2+).

Its subcellular location is the cytoplasm. The enzyme catalyses beta-D-fructose 1,6-bisphosphate + H2O = beta-D-fructose 6-phosphate + phosphate. It participates in carbohydrate biosynthesis; Calvin cycle. This chain is Fructose-1,6-bisphosphatase class 1, found in Chlorobium phaeobacteroides (strain BS1).